The sequence spans 218 residues: Large ribosomal subunit protein uL3 (218 aa).

2 disordered regions span residues 128–167 (FSRGPMSHGSKNHRLPGSIGAGTTPGRVYPGKRMAGRMGG) and 199–218 (SLLNIRPAKRVGAPTQQGGK).

It belongs to the universal ribosomal protein uL3 family. In terms of assembly, part of the 50S ribosomal subunit. Forms a cluster with proteins L14 and L19.

In terms of biological role, one of the primary rRNA binding proteins, it binds directly near the 3'-end of the 23S rRNA, where it nucleates assembly of the 50S subunit. The polypeptide is Large ribosomal subunit protein uL3 (Prochlorococcus marinus (strain NATL2A)).